The following is a 355-amino-acid chain: Vi polysaccharide export protein VexA/TviF (355 aa).

Positions 1-16 (MKKIIILLTTFFLLSG) are cleaved as a signal peptide. Cysteine 17 carries the N-palmitoyl cysteine lipid modification. A lipid anchor (S-diacylglycerol cysteine) is attached at cysteine 17.

The protein belongs to the BexD/CtrA/VexA family.

Its subcellular location is the cell outer membrane. May form an ATP-driven capsule polysaccharide export apparatus, in association with the VexB, VexC and VexD proteins. May function as a membrane anchor for the polysaccharide. Possible porin properties. This chain is Vi polysaccharide export protein VexA/TviF (vexA), found in Salmonella typhi.